The chain runs to 473 residues: Catalase easC (473 aa).

Positions Met-1–Ser-15 are enriched in low complexity. The interval Met-1–Asp-31 is disordered. Residue His-54 is part of the active site. Heme is bound at residue Tyr-344. The disordered stretch occupies residues Leu-352–Ala-389. Positions Lys-366–Glu-377 are enriched in basic and acidic residues.

It belongs to the catalase family. Heme serves as cofactor.

Its pathway is alkaloid biosynthesis; ergot alkaloid biosynthesis. Functionally, catalase; part of the gene cluster that mediates the biosynthesis of fungal ergot alkaloid. DmaW catalyzes the first step of ergot alkaloid biosynthesis by condensing dimethylallyl diphosphate (DMAP) and tryptophan to form 4-dimethylallyl-L-tryptophan. The second step is catalyzed by the methyltransferase easF that methylates 4-dimethylallyl-L-tryptophan in the presence of S-adenosyl-L-methionine, resulting in the formation of 4-dimethylallyl-L-abrine. The catalase easC and the FAD-dependent oxidoreductase easE then transform 4-dimethylallyl-L-abrine to chanoclavine-I which is further oxidized by easD in the presence of NAD(+), resulting in the formation of chanoclavine-I aldehyde. Agroclavine dehydrogenase easG then mediates the conversion of chanoclavine-I aldehyde to agroclavine via a non-enzymatic adduct reaction: the substrate is an iminium intermediate that is formed spontaneously from chanoclavine-I aldehyde in the presence of glutathione. The presence of easA is not required to complete this reaction. Further conversion of agroclavine to paspalic acid is a two-step process involving oxidation of agroclavine to elymoclavine and of elymoclavine to paspalic acid, the second step being performed by the elymoclavine oxidase cloA. Paspalic acid is then further converted to D-lysergic acid. Ergopeptines are assembled from D-lysergic acid and three different amino acids by the D-lysergyl-peptide-synthetases composed each of a monomudular and a trimodular nonribosomal peptide synthetase subunit. LpsB and lpsC encode the monomodular subunits responsible for D-lysergic acid activation and incorporation into the ergopeptine backbone. LpsA1 and A2 subunits encode the trimodular nonribosomal peptide synthetase assembling the tripeptide portion of ergopeptines. LpsA1 is responsible for formation of the major ergopeptine, ergotamine, and lpsA2 for alpha-ergocryptine, the minor ergopeptine of the total alkaloid mixture elaborated by C.purpurea. D-lysergyl-tripeptides are assembled by the nonribosomal peptide synthetases and released as N-(D-lysergyl-aminoacyl)-lactams. Cyclolization of the D-lysergyl-tripeptides is performed by the Fe(2+)/2-ketoglutarate-dependent dioxygenase easH which introduces a hydroxyl group into N-(D-lysergyl-aminoacyl)-lactam at alpha-C of the aminoacyl residue followed by spontaneous condensation with the terminal lactam carbonyl group. The chain is Catalase easC from Claviceps purpurea (strain 20.1) (Ergot fungus).